The sequence spans 737 residues: Protein penguin (737 aa).

The disordered stretch occupies residues 1-128 (MVSSEPKGPA…EKKDLKLKRK (128 aa)). Basic and acidic residues-rich tracts occupy residues 76-89 (KKFD…DKRL) and 107-122 (EGEK…EKKD). One can recognise a PUM-HD domain in the interval 139 to 490 (EANQIHEKLR…EILEQIEAPI (352 aa)). 5 Pumilio repeats span residues 167 to 202 (NVGD…EISE), 203 to 238 (KLLP…KLVD), 239 to 274 (SLYG…YMRQ), 388 to 425 (NIKE…AIYD), and 426 to 462 (HLHG…EFIR). Residues 577 to 638 (VESSSDDEDE…EEEPAAPLVS (62 aa)) are disordered. Residues 580 to 600 (SSDDEDEDEDEDEESDDEGDE) are compositionally biased toward acidic residues. Residues 601-615 (KEQKEAAADDAEPKV) are compositionally biased toward basic and acidic residues. Over residues 616–626 (KKAKKEPKKPK) the composition is skewed to basic residues.

The chain is Protein penguin from Drosophila melanogaster (Fruit fly).